The sequence spans 533 residues: Thromboxane-A synthase (533 aa).

Residues Met-1–Glu-10 are Cytoplasmic-facing. The helical transmembrane segment at Val-11–Tyr-31 threads the bilayer. Residues Ser-32–Gly-75 are Lumenal-facing. Residues Pro-76–Ile-96 form a helical membrane-spanning segment. Residues Lys-97–Arg-223 are Cytoplasmic-facing. The chain crosses the membrane as a helical span at residues Pro-224 to Pro-244. Over Asn-245 to Ala-335 the chain is Lumenal. Residues Phe-336–Leu-356 traverse the membrane as a helical segment. At Leu-357–Arg-533 the chain is on the cytoplasmic side. A heme-binding site is contributed by Cys-479.

It belongs to the cytochrome P450 family. In terms of assembly, monomer. Heme serves as cofactor.

The protein resides in the endoplasmic reticulum membrane. It carries out the reaction prostaglandin H2 = thromboxane A2. It catalyses the reaction prostaglandin H2 = (12S)-hydroxy-(5Z,8E,10E)-heptadecatrienoate + malonaldehyde. The enzyme catalyses a hydroperoxyeicosatetraenoate = an oxoeicosatetraenoate + H2O. The catalysed reaction is (15S)-hydroperoxy-(5Z,8Z,11Z,13E)-eicosatetraenoate = 15-oxo-(5Z,8Z,11Z,13E)-eicosatetraenoate + H2O. It carries out the reaction (15S)-hydroperoxy-(5Z,8Z,11Z,13E)-eicosatetraenoate + AH2 = (15S)-hydroxy-(5Z,8Z,11Z,13E)-eicosatetraenoate + A + H2O. In terms of biological role, catalyzes the conversion of prostaglandin H2 (PGH2) to thromboxane A2 (TXA2), a potent inducer of blood vessel constriction and platelet aggregation. Also cleaves PGH2 to 12-hydroxy-heptadecatrienoicacid (12-HHT) and malondialdehyde, which is known to act as a mediator of DNA damage. 12-HHT and malondialdehyde are formed stoichiometrically in the same amounts as TXA2. Additionally, displays dehydratase activity, toward (15S)-hydroperoxy-(5Z,8Z,11Z,13E)-eicosatetraenoate (15(S)-HPETE) producing 15-KETE and 15-HETE. The protein is Thromboxane-A synthase (TBXAS1) of Macaca fascicularis (Crab-eating macaque).